Consider the following 125-residue polypeptide: Protein MGF 110-7L (125 aa).

A signal peptide spans methionine 1–serine 20. Asparagine 69, asparagine 70, and asparagine 105 each carry an N-linked (GlcNAc...) asparagine; by host glycan.

This sequence belongs to the asfivirus MGF 110 family.

In terms of biological role, plays a role in virus cell tropism, and may be required for efficient virus replication in macrophages. The chain is Protein MGF 110-7L from Ornithodoros (relapsing fever ticks).